The following is a 569-amino-acid chain: Sulfite reductase [NADPH] hemoprotein beta-component (569 aa).

4 residues coordinate [4Fe-4S] cluster: cysteine 433, cysteine 439, cysteine 478, and cysteine 482. Cysteine 482 contributes to the siroheme binding site.

This sequence belongs to the nitrite and sulfite reductase 4Fe-4S domain family. Alpha(8)-beta(8). The alpha component is a flavoprotein, the beta component is a hemoprotein. It depends on siroheme as a cofactor. Requires [4Fe-4S] cluster as cofactor.

The catalysed reaction is hydrogen sulfide + 3 NADP(+) + 3 H2O = sulfite + 3 NADPH + 4 H(+). It participates in sulfur metabolism; hydrogen sulfide biosynthesis; hydrogen sulfide from sulfite (NADPH route): step 1/1. Functionally, component of the sulfite reductase complex that catalyzes the 6-electron reduction of sulfite to sulfide. This is one of several activities required for the biosynthesis of L-cysteine from sulfate. This Buchnera aphidicola subsp. Acyrthosiphon pisum (strain 5A) protein is Sulfite reductase [NADPH] hemoprotein beta-component.